The primary structure comprises 73 residues: uncharacterized protein (73 aa).

This is an uncharacterized protein from Ureaplasma parvum serovar 3 (strain ATCC 700970).